The following is a 274-amino-acid chain: MKKTQTWIITCIYLQLLLFNPLVRTQGICRNRVTDDVKDVTKLVANLPKDYKITLKYVPGMDVLPSHCWISEMVEQLSVSLTDLLDKFSNISEGLSNYSIIDKLVKIVDDLVECMEEHSFENVKKSSKSPEPRLFTPEKFFGIFNRSIDAFKDLEMVAPKTSECVISSTLTPEKDSRVSVTKPFMLPPVAASSLRNDSSSSNRKASDSIEDSSLQWAAVALPAFFSLVIGFAFGALYWKKKQPNLTRTVENIQINEEDNEISMLQEKEREFQEV.

The signal sequence occupies residues 1-25 (MKKTQTWIITCIYLQLLLFNPLVRT). Glutamine 26 bears the Pyrrolidone carboxylic acid mark. Over 26-215 (QGICRNRVTD…SDSIEDSSLQ (190 aa)) the chain is Extracellular. 2 disulfide bridges follow: cysteine 29/cysteine 114 and cysteine 68/cysteine 164. N-linked (GlcNAc...) asparagine glycosylation is found at asparagine 90, asparagine 97, asparagine 145, and asparagine 196. A helical membrane pass occupies residues 216–238 (WAAVALPAFFSLVIGFAFGALYW). Residues 239-274 (KKKQPNLTRTVENIQINEEDNEISMLQEKEREFQEV) lie on the Cytoplasmic side of the membrane.

This sequence belongs to the SCF family. Homodimer, non-covalently linked. Heterotetramer with KIT, binding two KIT molecules; thereby mediates KIT dimerization and subsequent activation by autophosphorylation. Post-translationally, a soluble form is produced by proteolytic processing of the extracellular domain.

It is found in the cytoplasm. The protein resides in the cytoskeleton. The protein localises to the cell membrane. Its subcellular location is the cell projection. It localises to the lamellipodium. It is found in the filopodium. The protein resides in the secreted. Ligand for the receptor-type protein-tyrosine kinase KIT. Plays an essential role in the regulation of cell survival and proliferation, hematopoiesis, stem cell maintenance, gametogenesis, mast cell development, migration and function, and in melanogenesis. KITLG/SCF binding can activate several signaling pathways. Promotes phosphorylation of PIK3R1, the regulatory subunit of phosphatidylinositol 3-kinase, and subsequent activation of the kinase AKT1. KITLG/SCF and KIT also transmit signals via GRB2 and activation of RAS, RAF1 and the MAP kinases MAPK1/ERK2 and/or MAPK3/ERK1. KITLG/SCF and KIT promote activation of STAT family members STAT1, STAT3 and STAT5. KITLG/SCF and KIT promote activation of PLCG1, leading to the production of the cellular signaling molecules diacylglycerol and inositol 1,4,5-trisphosphate. KITLG/SCF acts synergistically with other cytokines, probably interleukins. In Sus scrofa (Pig), this protein is Kit ligand (KITLG).